Here is a 659-residue protein sequence, read N- to C-terminus: Putative oxidoreductase AegA (659 aa).

5 consecutive 4Fe-4S ferredoxin-type domains span residues 3 to 22 (RFIM…EIAC), 47 to 77 (HQQQ…SHVD), 78 to 107 (DSIQ…IVLT), 114 to 147 (VKAT…LVTD), and 218 to 252 (DQAQ…WIEL). Positions 12, 15, 18, 22, 56, 59, 64, 68, 87, 90, 93, 97, 121, 124, 133, 137, 227, 230, 236, and 240 each coordinate [4Fe-4S] cluster.

Requires [4Fe-4S] cluster as cofactor.

Functionally, involved in formate-dependent uric acid degradation under microaerobic and anaerobic conditions. May reduce the enzymes necessary for uric acid degradation. The sequence is that of Putative oxidoreductase AegA from Escherichia coli (strain K12).